The chain runs to 318 residues: GPN-loop GTPase 2 (318 aa).

29–34 (GSGKST) contacts GTP. The short motif at 85–87 (GPN) is the Gly-Pro-Asn (GPN)-loop; involved in dimer interface element. A GTP-binding site is contributed by 187–190 (SKMD).

It belongs to the GPN-loop GTPase family. Heterodimers with gpn1 or gpn3. Binds to RNA polymerase II (RNAPII).

In terms of biological role, small GTPase required for proper localization of RNA polymerase II and III (RNAPII and RNAPIII). May act at an RNAP assembly step prior to nuclear import. This is GPN-loop GTPase 2 from Xenopus laevis (African clawed frog).